We begin with the raw amino-acid sequence, 215 residues long: Small ribosomal subunit protein uS5 (215 aa).

The disordered stretch occupies residues 1–62; it reads MTDSSPQSNP…QERDSEWQER (62 aa). Positions 9–28 are enriched in low complexity; that stretch reads NPNAVPGAADVPAAAEGQQQ. A compositionally biased stretch (basic and acidic residues) spans 29-61; it reads EQRRGGGRGERGDRRGGRRGDRRNQERDSEWQE. An S5 DRBM domain is found at 59-122; it reads WQERVVQIRR…ADGKKHLVKV (64 aa).

Belongs to the universal ribosomal protein uS5 family. In terms of assembly, part of the 30S ribosomal subunit. Contacts proteins S4 and S8.

Functionally, with S4 and S12 plays an important role in translational accuracy. Its function is as follows. Located at the back of the 30S subunit body where it stabilizes the conformation of the head with respect to the body. The chain is Small ribosomal subunit protein uS5 from Parasynechococcus marenigrum (strain WH8102).